Here is a 149-residue protein sequence, read N- to C-terminus: Large ribosomal subunit protein bL9 (149 aa).

It belongs to the bacterial ribosomal protein bL9 family.

Its function is as follows. Binds to the 23S rRNA. The polypeptide is Large ribosomal subunit protein bL9 (Teredinibacter turnerae (strain ATCC 39867 / T7901)).